A 278-amino-acid polypeptide reads, in one-letter code: MDVRQSIHSEHAKTLDTQALRREFLIENIFVADEYTMVYSHIDRIIVGGIMPVSHPVEIGGEVGKQLGVSRLLDRRELGVINIGGAGAIIVDGQRHDIGHRDALYIGKGAKELVFVSNEASRPAKFYYNCAPAHTAYPTKKVSPADVAPVTLGDNLTSNRRTINKYFVPDVLETCQLSMGLTELAPGNLWNTMPCHTHERRMEVYLYFNMEEDSCVFHMMGQPQETRHIVMRNEQAVISPSWSIHSGVGTKAYTFVWGMVGENQVFDDMDHVAVQDLR.

Positions 196, 198, 203, and 245 each coordinate Zn(2+).

This sequence belongs to the KduI family. Zn(2+) is required as a cofactor.

It carries out the reaction 5-dehydro-4-deoxy-D-glucuronate = 3-deoxy-D-glycero-2,5-hexodiulosonate. It functions in the pathway glycan metabolism; pectin degradation; 2-dehydro-3-deoxy-D-gluconate from pectin: step 4/5. Catalyzes the isomerization of 5-dehydro-4-deoxy-D-glucuronate to 3-deoxy-D-glycero-2,5-hexodiulosonate. This is 4-deoxy-L-threo-5-hexosulose-uronate ketol-isomerase from Salmonella typhimurium (strain LT2 / SGSC1412 / ATCC 700720).